The chain runs to 137 residues: Large ribosomal subunit protein uL22 (137 aa).

It belongs to the universal ribosomal protein uL22 family. Part of the 50S ribosomal subunit.

In terms of biological role, this protein binds specifically to 23S rRNA; its binding is stimulated by other ribosomal proteins, e.g. L4, L17, and L20. It is important during the early stages of 50S assembly. It makes multiple contacts with different domains of the 23S rRNA in the assembled 50S subunit and ribosome. Functionally, the globular domain of the protein is located near the polypeptide exit tunnel on the outside of the subunit, while an extended beta-hairpin is found that lines the wall of the exit tunnel in the center of the 70S ribosome. This Flavobacterium johnsoniae (strain ATCC 17061 / DSM 2064 / JCM 8514 / BCRC 14874 / CCUG 350202 / NBRC 14942 / NCIMB 11054 / UW101) (Cytophaga johnsonae) protein is Large ribosomal subunit protein uL22.